A 120-amino-acid polypeptide reads, in one-letter code: Flagellar protein FliT (120 aa).

Positions 1–50 (MENLSPLLIEYQGLLKLIRNIKAMALNGLWDDVVEQEIVYIQSIERISQI) are required for homodimerization. Residues 60–98 (VQLQFRQLLQDILDTESQVKELLQNRMQELAVLIQQSQN) form a fliD binding region.

It belongs to the FliT family. As to quaternary structure, homodimer. Interacts with FliD and FlhC.

It is found in the cytoplasm. It localises to the cytosol. Dual-function protein that regulates the transcription of class 2 flagellar operons and that also acts as an export chaperone for the filament-capping protein FliD. As a transcriptional regulator, acts as an anti-FlhDC factor; it directly binds FlhC, thus inhibiting the binding of the FlhC/FlhD complex to class 2 promoters, resulting in decreased expression of class 2 flagellar operons. As a chaperone, effects FliD transition to the membrane by preventing its premature polymerization, and by directing it to the export apparatus. This is Flagellar protein FliT from Dickeya chrysanthemi (Pectobacterium chrysanthemi).